The sequence spans 322 residues: Cytochrome f (322 aa).

The first 35 residues, 1-35 (MQTRNTFSWTWIREEITRSISVSLMIYIITWSSIS), serve as a signal peptide directing secretion. The heme site is built by Tyr38, Cys58, Cys61, and His62. The chain crosses the membrane as a helical span at residues 288-308 (VQGLLFFLGSVVLAQIFLVLK).

The protein belongs to the cytochrome f family. As to quaternary structure, the 4 large subunits of the cytochrome b6-f complex are cytochrome b6, subunit IV (17 kDa polypeptide, petD), cytochrome f and the Rieske protein, while the 4 small subunits are PetG, PetL, PetM and PetN. The complex functions as a dimer. It depends on heme as a cofactor.

Its subcellular location is the plastid. It localises to the chloroplast thylakoid membrane. In terms of biological role, component of the cytochrome b6-f complex, which mediates electron transfer between photosystem II (PSII) and photosystem I (PSI), cyclic electron flow around PSI, and state transitions. The sequence is that of Cytochrome f from Aethionema cordifolium (Lebanon stonecress).